Here is a 231-residue protein sequence, read N- to C-terminus: Phosphoribosylformylglycinamidine synthase subunit PurQ (231 aa).

One can recognise a Glutamine amidotransferase type-1 domain in the interval 7 to 231 (GVVVFPGSNC…RLFASLFRQL (225 aa)). The active-site Nucleophile is C89. Catalysis depends on residues H206 and E208.

Part of the FGAM synthase complex composed of 1 PurL, 1 PurQ and 2 PurS subunits.

The protein localises to the cytoplasm. It catalyses the reaction N(2)-formyl-N(1)-(5-phospho-beta-D-ribosyl)glycinamide + L-glutamine + ATP + H2O = 2-formamido-N(1)-(5-O-phospho-beta-D-ribosyl)acetamidine + L-glutamate + ADP + phosphate + H(+). The enzyme catalyses L-glutamine + H2O = L-glutamate + NH4(+). It participates in purine metabolism; IMP biosynthesis via de novo pathway; 5-amino-1-(5-phospho-D-ribosyl)imidazole from N(2)-formyl-N(1)-(5-phospho-D-ribosyl)glycinamide: step 1/2. In terms of biological role, part of the phosphoribosylformylglycinamidine synthase complex involved in the purines biosynthetic pathway. Catalyzes the ATP-dependent conversion of formylglycinamide ribonucleotide (FGAR) and glutamine to yield formylglycinamidine ribonucleotide (FGAM) and glutamate. The FGAM synthase complex is composed of three subunits. PurQ produces an ammonia molecule by converting glutamine to glutamate. PurL transfers the ammonia molecule to FGAR to form FGAM in an ATP-dependent manner. PurS interacts with PurQ and PurL and is thought to assist in the transfer of the ammonia molecule from PurQ to PurL. This Chlorobium luteolum (strain DSM 273 / BCRC 81028 / 2530) (Pelodictyon luteolum) protein is Phosphoribosylformylglycinamidine synthase subunit PurQ.